Consider the following 28-residue polypeptide: fur leader peptide (28 aa).

Its function is as follows. Cotranscribed with fur, it is essential for fur translation. The fur ribosomal binding site (RBS) is occluded by the 5'-mRNA secondary structure, which is opened by uof translation. The sequence is that of fur leader peptide (uof) from Escherichia coli (strain K12).